The sequence spans 214 residues: MSAEVPTFKLVLVGDGGTGKTTFVKRHLTGEFEKKYIATIGVEVHPLAFHTNFGEIKFDVWDTAGQEKFGGLRDGYYINAQCGIIMFDVTSRITYKNVPNWHRDLVRVCENIPIVLCGNKVDVKERKVKAKTITFHRKKNLQYYDISAKSNYNFEKPFLWLARKLAGNPQLEFVASPALAPPEVQVDEQLMQQYQQEMEQATALPLPDEDDADL.

The Small GTPase Ran-type domain maps to 4–168 (EVPTFKLVLV…LWLARKLAGN (165 aa)). A GTP-binding site is contributed by 15–22 (DGGTGKTT). The tract at residues 34–42 (KKYIATIGV) is switch-I. Residues Gly65, 119 to 122 (NKVD), and 147 to 149 (SAK) contribute to the GTP site. Residues 65 to 81 (GQEKFGGLRDGYYINAQ) are switch-II.

It belongs to the small GTPase superfamily. Ran family. As to quaternary structure, found in a nuclear export complex with RanGTP, exportin and pre-miRNA.

The protein resides in the nucleus. Functionally, GTP-binding protein involved in nucleocytoplasmic transport. Required for the import of protein into the nucleus and also for RNA export. Involved in chromatin condensation and control of cell cycle. In Candida glabrata (strain ATCC 2001 / BCRC 20586 / JCM 3761 / NBRC 0622 / NRRL Y-65 / CBS 138) (Yeast), this protein is GTP-binding nuclear protein GSP1/Ran (GSP1).